The primary structure comprises 305 residues: Glycine--tRNA ligase alpha subunit (305 aa).

Belongs to the class-II aminoacyl-tRNA synthetase family. As to quaternary structure, tetramer of two alpha and two beta subunits.

Its subcellular location is the cytoplasm. The enzyme catalyses tRNA(Gly) + glycine + ATP = glycyl-tRNA(Gly) + AMP + diphosphate. The chain is Glycine--tRNA ligase alpha subunit from Janthinobacterium sp. (strain Marseille) (Minibacterium massiliensis).